The primary structure comprises 603 residues: Trihelix transcription factor DF1 (603 aa).

The Myb-like 1 domain maps to 60-118 (NRWPRQETLALLKIRSDMGIAFRDASVKGPLWEEVSRKMAEHGYIRNAKKCKEKFENVY). Disordered stretches follow at residues 149-201 (QSTT…SSIP), 220-249 (LSDN…TRKK), 333-408 (KQPN…SSSR), and 532-603 (QWPP…TNNL). Composition is skewed to low complexity over residues 168-178 (NNNNNNNNNNN), 189-198 (TTVMPTLPSS), 221-236 (SDNS…TSSD), and 344-362 (PQQV…QQPP). The segment covering 363 to 376 (QRSPPPQPPAPLPQ) has biased composition (pro residues). Residues 381–408 (VVSTLDTTKTDNGGDQNMTPAASASSSR) show a composition bias toward polar residues. One can recognise a Myb-like 2 domain in the interval 401–465 (AASASSSRWP…RCKEKWENIN (65 aa)). The span at 532 to 555 (QWPPAVTTATTTPAAAQPDQQSQP) shows a compositional bias: low complexity. The span at 559-586 (NFDDEEGTDEEYDDEDEEEENEEEEGGE) shows a compositional bias: acidic residues. Residues 593-603 (NNNNNKTTNNL) are compositionally biased toward low complexity.

The protein localises to the nucleus. In terms of biological role, transcription repressor that negatively regulates root hair growth by directly binding RSL4 promoter and repressing RSL4 expression. Required for the synthesis of seed coat mucilage. The protein is Trihelix transcription factor DF1 of Arabidopsis thaliana (Mouse-ear cress).